The chain runs to 298 residues: MQLEKMITEGSNAASAEIDRVSTLEMCRIINDEDKTVPLAVERVLPDIAAAIDVIHAQVSGGGRLIYLGAGTSGRLGILDASECPPTYGVKPGLVVGLIAGGEYAIQHAVEGAEDSREGGVNDLKNIGLTAQDVVVGIAASGRTPYVIAGLEYAHQLGCRTVGISCNPGSAVSTTAEFAITPVVGAEVVTGSSRMKAGTAQKLVLNMLSTGLMIKSGKVFGNLMVDVVATNEKLHVRQVNIVKNATGCSAEQAETALIACKRNCKTAIVMVLKNLDADEAKKCLDQHGGFIRKALEKE.

In terms of domain architecture, SIS spans 55 to 218 (IHAQVSGGGR…STGLMIKSGK (164 aa)). E83 (proton donor) is an active-site residue. E114 is an active-site residue.

Belongs to the GCKR-like family. MurNAc-6-P etherase subfamily. In terms of assembly, homodimer.

It carries out the reaction N-acetyl-D-muramate 6-phosphate + H2O = N-acetyl-D-glucosamine 6-phosphate + (R)-lactate. It participates in amino-sugar metabolism; 1,6-anhydro-N-acetylmuramate degradation. It functions in the pathway amino-sugar metabolism; N-acetylmuramate degradation. Its pathway is cell wall biogenesis; peptidoglycan recycling. Functionally, specifically catalyzes the cleavage of the D-lactyl ether substituent of MurNAc 6-phosphate, producing GlcNAc 6-phosphate and D-lactate. Together with AnmK, is also required for the utilization of anhydro-N-acetylmuramic acid (anhMurNAc) either imported from the medium or derived from its own cell wall murein, and thus plays a role in cell wall recycling. The chain is N-acetylmuramic acid 6-phosphate etherase from Escherichia coli (strain SMS-3-5 / SECEC).